The following is a 502-amino-acid chain: Glycerol kinase (502 aa).

Residue Thr-14 coordinates ADP. Residues Thr-14 and Thr-15 each coordinate ATP. Thr-14 contacts sn-glycerol 3-phosphate. Arg-18 contributes to the ADP binding site. Sn-glycerol 3-phosphate contacts are provided by Arg-84, Glu-85, Tyr-136, and Asp-245. Glycerol contacts are provided by Arg-84, Glu-85, Tyr-136, Asp-245, and Gln-246. Residues Thr-267 and Gly-314 each coordinate ADP. Residues Thr-267, Gly-314, Gln-318, and Gly-415 each coordinate ATP. Residues Gly-415 and Asn-419 each coordinate ADP.

Belongs to the FGGY kinase family.

The catalysed reaction is glycerol + ATP = sn-glycerol 3-phosphate + ADP + H(+). It participates in polyol metabolism; glycerol degradation via glycerol kinase pathway; sn-glycerol 3-phosphate from glycerol: step 1/1. Inhibited by fructose 1,6-bisphosphate (FBP). Functionally, key enzyme in the regulation of glycerol uptake and metabolism. Catalyzes the phosphorylation of glycerol to yield sn-glycerol 3-phosphate. In Acaryochloris marina (strain MBIC 11017), this protein is Glycerol kinase.